Reading from the N-terminus, the 369-residue chain is Maltose/maltodextrin import ATP-binding protein MalK (369 aa).

Residues Val4 to Ile234 enclose the ABC transporter domain. Gly36–Ser43 provides a ligand contact to ATP.

The protein belongs to the ABC transporter superfamily. Maltooligosaccharide importer (TC 3.A.1.1.1) family. In terms of assembly, the complex is composed of two ATP-binding proteins (MalK), two transmembrane proteins (MalG and MalK) and a solute-binding protein (MalE).

It localises to the cell inner membrane. The catalysed reaction is D-maltose(out) + ATP + H2O = D-maltose(in) + ADP + phosphate + H(+). Its function is as follows. Part of the ABC transporter complex MalEFGK involved in maltose/maltodextrin import. Responsible for energy coupling to the transport system. In Salmonella typhi, this protein is Maltose/maltodextrin import ATP-binding protein MalK.